The sequence spans 184 residues: ATP synthase subunit b (184 aa).

A helical transmembrane segment spans residues 4 to 24 (LSVLFALVASPALAASGPFFS).

The protein belongs to the ATPase B chain family. In terms of assembly, F-type ATPases have 2 components, F(1) - the catalytic core - and F(0) - the membrane proton channel. F(1) has five subunits: alpha(3), beta(3), gamma(1), delta(1), epsilon(1). F(0) has three main subunits: a(1), b(2) and c(10-14). The alpha and beta chains form an alternating ring which encloses part of the gamma chain. F(1) is attached to F(0) by a central stalk formed by the gamma and epsilon chains, while a peripheral stalk is formed by the delta and b chains.

It is found in the cell inner membrane. Its function is as follows. F(1)F(0) ATP synthase produces ATP from ADP in the presence of a proton or sodium gradient. F-type ATPases consist of two structural domains, F(1) containing the extramembraneous catalytic core and F(0) containing the membrane proton channel, linked together by a central stalk and a peripheral stalk. During catalysis, ATP synthesis in the catalytic domain of F(1) is coupled via a rotary mechanism of the central stalk subunits to proton translocation. In terms of biological role, component of the F(0) channel, it forms part of the peripheral stalk, linking F(1) to F(0). This is ATP synthase subunit b from Paracoccus denitrificans (strain Pd 1222).